Reading from the N-terminus, the 427-residue chain is UBX domain-containing protein 10 (427 aa).

Residues 247-311 (LERFRSEREA…VQKKKKQYRA (65 aa)) are a coiled coil. The UBX domain occupies 323-425 (SEDEPARLSI…FPNGTVVVEL (103 aa)).

It localises to the endoplasmic reticulum. Its function is as follows. Involved in protein degradation through the ubiquitin/proteasome pathway. The polypeptide is UBX domain-containing protein 10 (ucp10) (Schizosaccharomyces pombe (strain 972 / ATCC 24843) (Fission yeast)).